Consider the following 152-residue polypeptide: UPF0266 membrane protein KPN78578_23010 (152 aa).

3 helical membrane passes run 6–26 (LVIILFILALLAYAIYDQFIM), 45–65 (VDGMIFVGLTAILIYNNITQH), and 67–87 (TAITTWLLSVLALMGLYLFWI).

This sequence belongs to the UPF0266 family.

The protein resides in the cell inner membrane. The polypeptide is UPF0266 membrane protein KPN78578_23010 (Klebsiella pneumoniae subsp. pneumoniae (strain ATCC 700721 / MGH 78578)).